Reading from the N-terminus, the 22-residue chain is Cysteine-rich venom protein collettin-a (22 aa).

The segment covering 1 to 15 (SNKKNYQKEIVDKHN) has biased composition (basic and acidic residues). A disordered region spans residues 1–22 (SNKKNYQKEIVDKHNALRRSVK).

The protein belongs to the CRISP family. Contains 8 disulfide bonds. Expressed by the venom gland.

The protein resides in the secreted. The polypeptide is Cysteine-rich venom protein collettin-a (Pseudechis colletti (Collett's snake)).